A 282-amino-acid polypeptide reads, in one-letter code: Acetyl-coenzyme A carboxylase carboxyl transferase subunit beta (282 aa).

In terms of domain architecture, CoA carboxyltransferase N-terminal spans 29 to 282 (LMQRCPNCGL…LLKYGGMQDD (254 aa)). Residues C33, C36, C51, and C54 each coordinate Zn(2+). The segment at 33–54 (CPNCGLEFFARRLDKYKTCPDC) adopts a C4-type zinc-finger fold.

It belongs to the AccD/PCCB family. Acetyl-CoA carboxylase is a heterohexamer composed of biotin carboxyl carrier protein (AccB), biotin carboxylase (AccC) and two subunits each of ACCase subunit alpha (AccA) and ACCase subunit beta (AccD). The cofactor is Zn(2+).

The protein localises to the cytoplasm. It catalyses the reaction N(6)-carboxybiotinyl-L-lysyl-[protein] + acetyl-CoA = N(6)-biotinyl-L-lysyl-[protein] + malonyl-CoA. Its pathway is lipid metabolism; malonyl-CoA biosynthesis; malonyl-CoA from acetyl-CoA: step 1/1. Component of the acetyl coenzyme A carboxylase (ACC) complex. Biotin carboxylase (BC) catalyzes the carboxylation of biotin on its carrier protein (BCCP) and then the CO(2) group is transferred by the transcarboxylase to acetyl-CoA to form malonyl-CoA. The sequence is that of Acetyl-coenzyme A carboxylase carboxyl transferase subunit beta from Lactobacillus delbrueckii subsp. bulgaricus (strain ATCC BAA-365 / Lb-18).